We begin with the raw amino-acid sequence, 276 residues long: Urease accessory protein UreD (276 aa).

This sequence belongs to the UreD family. As to quaternary structure, ureD, UreF and UreG form a complex that acts as a GTP-hydrolysis-dependent molecular chaperone, activating the urease apoprotein by helping to assemble the nickel containing metallocenter of UreC. The UreE protein probably delivers the nickel.

The protein localises to the cytoplasm. Required for maturation of urease via the functional incorporation of the urease nickel metallocenter. This is Urease accessory protein UreD from Variovorax paradoxus (strain S110).